We begin with the raw amino-acid sequence, 315 residues long: Long form salivary protein D7L1 (315 aa).

The N-terminal stretch at 1-18 (MIIVAVLLSFLAHLLVQA) is a signal peptide. Cystine bridges form between cysteine 37–cysteine 73 and cysteine 69–cysteine 128. Tryptophan 55 contacts thromboxane A2. Position 58 (tryptophan 58) interacts with leukotriene C4. Tyrosine 70 serves as a coordination point for thromboxane A2. The leukotriene C4 site is built by glycine 152 and lysine 170. Lysine 170 lines the thromboxane A2 pocket. 2 disulfide bridges follow: cysteine 178–cysteine 211 and cysteine 252–cysteine 263.

Belongs to the PBP/GOBP family. In terms of tissue distribution, distal-lateral and median lobes of female salivary gland (at protein level). Not detected in male salivary gland (at protein level). Expressed in female salivary gland. Not detected in female carcass without salivary glands. Expressed in male salivary gland and other tissues.

Its subcellular location is the secreted. Modulates blood feeding of female mosquitoes on vertebrate species by binding and sequestering different mediators involved in the host response. Binds leukotriene C4, leukotriene D4, leukotriene E4 and stable analogs of thromboxane A2, U-46619 and carbocyclic TXA2. Binds weakly prostaglandins: PGD2, PGE2 and PGF2alpha. Does not bind leukotriene B4, biogenic amines, ADP, platelet activating phospholipid derivative PAF and arachidonic acid. Inhibits agonist-induced smooth muscle contraction. Inhibits platelet aggregation induced by low concentrations of collagen in thromboxane A2-dependent manner. The sequence is that of Long form salivary protein D7L1 from Anopheles stephensi (Indo-Pakistan malaria mosquito).